A 1265-amino-acid chain; its full sequence is Guanine nucleotide exchange factor SDC25 (1265 aa).

The region spanning 26–97 is the SH3 domain; that stretch reads QPIDVVECTY…PPSFTRSILN (72 aa). Disordered stretches follow at residues 409–454 and 623–648; these read IPAS…DTIW and LNLD…DEYE. The span at 416 to 428 shows a compositional bias: low complexity; it reads TSCSSETSHHSPS. An N-terminal Ras-GEF domain is found at 782–914; sequence SNNRIKGGSK…LLKEVNQKFK (133 aa). The region spanning 952 to 1199 is the Ras-GEF domain; that stretch reads DPVLFATQLT…YQLSLIIEPK (248 aa). Residues 1201–1252 are disordered; sequence RKKVVPNSNSNNKSQEKSRDDQTDEGKTSTKKDRFSKFQLHKTKKKAPKVSK. Positions 1214 to 1236 are enriched in basic and acidic residues; sequence SQEKSRDDQTDEGKTSTKKDRFS. Residues 1239-1252 show a composition bias toward basic residues; the sequence is QLHKTKKKAPKVSK.

In terms of biological role, promotes the exchange of Ras-bound GDP by GTP. The chain is Guanine nucleotide exchange factor SDC25 (SDC25) from Saccharomyces cerevisiae (strain AWRI1631) (Baker's yeast).